We begin with the raw amino-acid sequence, 353 residues long: Farnesyl pyrophosphate synthase (353 aa).

Residues Lys-57, Arg-60, and Gln-96 each contribute to the isopentenyl diphosphate site. Lys-57 is modified (N6-(2-hydroxyisobutyryl)lysine; alternate). Lys-57 is subject to N6-acetyllysine; alternate. Residues Asp-103 and Asp-107 each coordinate Mg(2+). Arg-112 is a binding site for dimethylallyl diphosphate. Arg-113 provides a ligand contact to isopentenyl diphosphate. Dimethylallyl diphosphate contacts are provided by Lys-200, Thr-201, Gln-240, Lys-257, and Lys-266.

It belongs to the FPP/GGPP synthase family. As to quaternary structure, homodimer. Interacts with RSAD2. Mg(2+) is required as a cofactor. As to expression, testis, liver, kidney, brain and adrenal gland.

It is found in the cytoplasm. The enzyme catalyses isopentenyl diphosphate + dimethylallyl diphosphate = (2E)-geranyl diphosphate + diphosphate. The catalysed reaction is isopentenyl diphosphate + (2E)-geranyl diphosphate = (2E,6E)-farnesyl diphosphate + diphosphate. It participates in isoprenoid biosynthesis; farnesyl diphosphate biosynthesis; farnesyl diphosphate from geranyl diphosphate and isopentenyl diphosphate: step 1/1. It functions in the pathway isoprenoid biosynthesis; geranyl diphosphate biosynthesis; geranyl diphosphate from dimethylallyl diphosphate and isopentenyl diphosphate: step 1/1. Inactivated by interferon-induced RSAD2. This inactivation may result of disruption of lipid rafts at the plasma membrane, and thus have an antiviral effect since many enveloped viruses need lipid rafts to bud efficiently out of the cell. In terms of biological role, key enzyme in isoprenoid biosynthesis which catalyzes the formation of farnesyl diphosphate (FPP), a precursor for several classes of essential metabolites including sterols, dolichols, carotenoids, and ubiquinones. FPP also serves as substrate for protein farnesylation and geranylgeranylation. Catalyzes the sequential condensation of isopentenyl pyrophosphate with the allylic pyrophosphates, dimethylallyl pyrophosphate, and then with the resultant geranylpyrophosphate to the ultimate product farnesyl pyrophosphate. This chain is Farnesyl pyrophosphate synthase (Fdps), found in Rattus norvegicus (Rat).